Consider the following 69-residue polypeptide: Putative membrane protein insertion efficiency factor (69 aa).

Belongs to the UPF0161 family.

The protein localises to the cell membrane. Could be involved in insertion of integral membrane proteins into the membrane. In Clostridium beijerinckii (strain ATCC 51743 / NCIMB 8052) (Clostridium acetobutylicum), this protein is Putative membrane protein insertion efficiency factor.